The sequence spans 121 residues: MSNYVVAMEAAWLVRDVENSDDAIGVAVSEAGKRLNDQDLDYVEVEAGVTGCPACGEGLDAAFLAANTALVGLVLELTVFNADSDEHAQRIAKSEVGGALRDVPLEVIDVIEDGDAPAEEA.

This sequence belongs to the UPF0212 family.

The sequence is that of UPF0212 protein VNG_0879C from Halobacterium salinarum (strain ATCC 700922 / JCM 11081 / NRC-1) (Halobacterium halobium).